The sequence spans 921 residues: Isoleucine--tRNA ligase (921 aa).

The 'HIGH' region motif lies at 57 to 67 (PYANGDIHMGH). Glu-552 contacts L-isoleucyl-5'-AMP. The 'KMSKS' region signature appears at 593–597 (KMSKS). Lys-596 lines the ATP pocket. Positions 888, 891, 908, and 911 each coordinate Zn(2+).

Belongs to the class-I aminoacyl-tRNA synthetase family. IleS type 1 subfamily. In terms of assembly, monomer. Requires Zn(2+) as cofactor.

The protein resides in the cytoplasm. The catalysed reaction is tRNA(Ile) + L-isoleucine + ATP = L-isoleucyl-tRNA(Ile) + AMP + diphosphate. In terms of biological role, catalyzes the attachment of isoleucine to tRNA(Ile). As IleRS can inadvertently accommodate and process structurally similar amino acids such as valine, to avoid such errors it has two additional distinct tRNA(Ile)-dependent editing activities. One activity is designated as 'pretransfer' editing and involves the hydrolysis of activated Val-AMP. The other activity is designated 'posttransfer' editing and involves deacylation of mischarged Val-tRNA(Ile). The polypeptide is Isoleucine--tRNA ligase (Bacillus mycoides (strain KBAB4) (Bacillus weihenstephanensis)).